The chain runs to 259 residues: Undecaprenyl-diphosphatase 4 (259 aa).

Helical transmembrane passes span 1–21 (MNWLEAFILGIIQGLTEFLPI), 39–59 (AGLFLDTMLHIGTLLAVFIYY), 71–91 (FSKLMLLLIVGTIPAVVIGLL), 99–119 (ISKTGITIGWEFLVTGFFLYM), 133–153 (ITYKDAFIIGSFQAAAIFPAI), 173–193 (AAYFSFLLSTPAIVGAIILQF), 208–228 (SLIVGTLSAAFFGYIAVSWMI), and 239–259 (FAYYVWGLGIIIITLQYTHVF).

It belongs to the UppP family.

It localises to the cell membrane. It carries out the reaction di-trans,octa-cis-undecaprenyl diphosphate + H2O = di-trans,octa-cis-undecaprenyl phosphate + phosphate + H(+). Its function is as follows. Catalyzes the dephosphorylation of undecaprenyl diphosphate (UPP). Confers resistance to bacitracin. The protein is Undecaprenyl-diphosphatase 4 of Bacillus thuringiensis (strain Al Hakam).